The following is a 1627-amino-acid chain: Pleckstrin homology domain-containing family G member 4B (1627 aa).

6 disordered regions span residues 211 to 349 (YSSC…VQPR), 381 to 475 (LTGA…GQAV), 501 to 537 (VSTD…GTGD), 959 to 1008 (SEAA…PAQP), 1049 to 1111 (TTAH…SKGL), and 1124 to 1159 (PLWQ…QVGS). Over residues 241-251 (GSASCPDTLTS) the composition is skewed to polar residues. 2 stretches are compositionally biased toward basic and acidic residues: residues 262–273 (QLRHLPYPERAE) and 310–322 (ERPD…DRPK). The segment covering 465 to 474 (RPGGHLGGQA) has biased composition (gly residues). Over residues 975 to 985 (PKHERAQEAMR) the composition is skewed to basic and acidic residues. Positions 1057–1068 (SACSSEPTQTLA) are enriched in polar residues. Over residues 1070-1081 (RPRKHPQKKMIK) the composition is skewed to basic residues. 2 stretches are compositionally biased toward polar residues: residues 1101–1111 (PDHTSVFSKGL) and 1133–1144 (PVTQSRSLSSPS). Residues 1161 to 1340 (RLRHIMAEMI…CFQLRHGNDL (180 aa)) enclose the DH domain. In terms of domain architecture, PH spans 1352 to 1460 (NLKEQGQLRC…WTDVIGRILW (109 aa)). Residues 1519 to 1558 (KGTESQMRGSTAVSSSDHAAPFKRPHSTISDSSTSSSSSQ) are disordered. Residues 1521–1535 (TESQMRGSTAVSSSD) show a composition bias toward polar residues. Low complexity predominate over residues 1545-1558 (STISDSSTSSSSSQ).

As to quaternary structure, found in a complex with ARHGEF11 and ARHGEF12; binding to ARHGEF11 and ARHGEF12 enhances CDC42 GEF activity of PLEKHG4B, and PLEKHG4B, in turn, inhibits ARHGEF11- and ARHGEF12-mediated RHOA activation. Interacts with ANXA2; this interaction is required for PLEKHG4B localization to cell-cell adhesions.

It is found in the basal cell membrane. The protein resides in the cell junction. Its subcellular location is the nucleus. It localises to the cytoplasm. Guanine nucleotide exchange factor (GEF) which specifically activates small GTPase CDC42 by exchanging bound GDP for free GTP. Plays a role in actin cytoskeletal remodeling in the late stage of cell-cell junction formation by regulating the contractility of actin filaments, which prompts the conversion from 'open' to 'closed' junctions. This is Pleckstrin homology domain-containing family G member 4B from Homo sapiens (Human).